Here is a 332-residue protein sequence, read N- to C-terminus: L-lactate dehydrogenase A chain (332 aa).

Residues 29–57 and Arg99 each bind NAD(+); that span reads GAVGMACAISILMKDLADELALVDVIEDK. 3 residues coordinate substrate: Arg106, Asn138, and Arg169. Asn138 contributes to the NAD(+) binding site. The Proton acceptor role is filled by His193. Thr248 provides a ligand contact to substrate.

The protein belongs to the LDH/MDH superfamily. LDH family. As to quaternary structure, homotetramer.

The protein resides in the cytoplasm. It catalyses the reaction (S)-lactate + NAD(+) = pyruvate + NADH + H(+). Its pathway is fermentation; pyruvate fermentation to lactate; (S)-lactate from pyruvate: step 1/1. Functionally, interconverts simultaneously and stereospecifically pyruvate and lactate with concomitant interconversion of NADH and NAD(+). The chain is L-lactate dehydrogenase A chain (LDHA) from Sceloporus woodi (Florida scrub lizard).